Here is a 196-residue protein sequence, read N- to C-terminus: UMP-CMP kinase (196 aa).

13–18 (GAGKGT) serves as a coordination point for ATP. At Ser33 the chain carries Phosphoserine. Positions 33–63 (SAGELLRDERKNPDSQYGELIEKYIKDGKIV) are NMP. Arg39 is an a ribonucleoside 5'-phosphate binding site. Lys43 and Lys55 each carry N6-acetyllysine. A ribonucleoside 5'-phosphate is bound by residues 61 to 63 (KIV) and 93 to 96 (GFPR). A CMP-binding site is contributed by Asn100. Lys106 carries the post-translational modification N6-succinyllysine. Residues 133–143 (ERGKSSGRSDD) are LID. Residue Arg134 coordinates ATP. A ribonucleoside 5'-phosphate contacts are provided by Arg140 and Arg151. Residue Lys179 coordinates ATP. Ser180 carries the phosphoserine modification.

It belongs to the adenylate kinase family. UMP-CMP kinase subfamily. In terms of assembly, monomer. Requires Mg(2+) as cofactor.

The protein resides in the nucleus. It is found in the cytoplasm. It carries out the reaction CMP + ATP = CDP + ADP. The catalysed reaction is dCMP + ATP = dCDP + ADP. It catalyses the reaction UMP + ATP = UDP + ADP. The enzyme catalyses a 2'-deoxyribonucleoside 5'-diphosphate + ATP = a 2'-deoxyribonucleoside 5'-triphosphate + ADP. It carries out the reaction a ribonucleoside 5'-diphosphate + ATP = a ribonucleoside 5'-triphosphate + ADP. Functionally, catalyzes the phosphorylation of pyrimidine nucleoside monophosphates at the expense of ATP. Plays an important role in de novo pyrimidine nucleotide biosynthesis. Has preference for UMP and CMP as phosphate acceptors. Also displays broad nucleoside diphosphate kinase activity. This is UMP-CMP kinase from Bos taurus (Bovine).